Here is a 527-residue protein sequence, read N- to C-terminus: Pentatricopeptide repeat-containing protein At5g41170, mitochondrial (527 aa).

The transit peptide at 1 to 35 (MAMRFFQLHRNRLVKGNSGKALSFSRLLDLSFWVR) directs the protein to the mitochondrion. 14 PPR repeats span residues 36-70 (AFCN…RPLP), 71-105 (SIID…GVSH), 106-140 (DLYT…GFEP), 141-175 (DIVT…GIKP), 176-210 (DVVM…GIRP), 211-245 (DVVM…KIKP), 246-280 (DVIT…SIAP), 281-315 (NIFT…GCFP), 316-350 (DVVA…GLTG), 351-385 (NTIT…GVPP), 386-420 (NIRT…EMDG), 424-458 (NIWT…EMDI), 459-493 (GIIT…GVKP), and 494-527 (NVVT…DGVS).

This sequence belongs to the PPR family. P subfamily.

It localises to the mitochondrion. This chain is Pentatricopeptide repeat-containing protein At5g41170, mitochondrial, found in Arabidopsis thaliana (Mouse-ear cress).